Reading from the N-terminus, the 393-residue chain is Branched-chain-amino-acid aminotransferase, mitochondrial (393 aa).

Residues 1–16 constitute a mitochondrion transit peptide; that stretch reads MLQRHSLKLGKFSIRT. At Lys219 the chain carries N6-(pyridoxal phosphate)lysine. The residue at position 315 (Thr315) is a Phosphothreonine.

Belongs to the class-IV pyridoxal-phosphate-dependent aminotransferase family. Requires pyridoxal 5'-phosphate as cofactor.

It is found in the mitochondrion matrix. The enzyme catalyses L-leucine + 2-oxoglutarate = 4-methyl-2-oxopentanoate + L-glutamate. It catalyses the reaction L-isoleucine + 2-oxoglutarate = (S)-3-methyl-2-oxopentanoate + L-glutamate. It carries out the reaction L-valine + 2-oxoglutarate = 3-methyl-2-oxobutanoate + L-glutamate. The catalysed reaction is a 2-oxocarboxylate + L-methionine = 4-methylsulfanyl-2-oxobutanoate + an L-alpha-amino acid. Its pathway is amino-acid biosynthesis; L-isoleucine biosynthesis; L-isoleucine from 2-oxobutanoate: step 4/4. It participates in amino-acid biosynthesis; L-leucine biosynthesis; L-leucine from 3-methyl-2-oxobutanoate: step 4/4. It functions in the pathway amino-acid biosynthesis; L-valine biosynthesis; L-valine from pyruvate: step 4/4. The protein operates within amino-acid biosynthesis; L-methionine biosynthesis via salvage pathway; L-methionine from S-methyl-5-thio-alpha-D-ribose 1-phosphate: step 6/6. Mitochondrial isozyme of branched-chain-amino-acid aminotransferase, involved in the biosynthesis of the branched chain amino acids (BCAAs) leucine, isoleucine, and valine. Catalyzes the formation of methionine from 2-keto-4-methylthiobutyrate (KMTB) in the methionine salvage pathway primarily using BCAAs (leucine, isoleucine, and valine) as the amino donors. Appears to be involved in the regulation of the cell cycle, although this may be indirect via metabolic changes. Connects BCAAs and TCA-cycle metabolism governing TCA-cycle flux to activate TORC1 signaling. High copy suppressor of a temperature-sensitive mutation in the ABC transporter, ATM1. This chain is Branched-chain-amino-acid aminotransferase, mitochondrial, found in Saccharomyces cerevisiae (strain ATCC 204508 / S288c) (Baker's yeast).